The primary structure comprises 229 residues: MLICIPDVLSKDEVAEFRRIMDAAEWEDGRSTAGAQSAMVKRNEQLPPDGEAARLLGQRVITALTKNPRFLSAAIPLQIFPPLFNRYTSSRGDHFGIHVDNAVRGDPLTGLRIRTDLSMTLFLAEPDTYDGGELVIEDTYGSHEVKLPAGHAVLYPSSSLHMVTPVTRGARVASFFWMQSMIRDAHVRSMIFDLDTTIQSLTERFGRDDPDAVKLTGIYHNLIRQWAEV.

A Fe2OG dioxygenase domain is found at 78-180 (QIFPPLFNRY…RVASFFWMQS (103 aa)). Positions 98, 100, and 161 each coordinate Fe cation. Residue Arg-171 participates in 2-oxoglutarate binding.

The cofactor is Fe(2+). L-ascorbate serves as cofactor.

In Bradyrhizobium sp. (strain ORS 278), this protein is PKHD-type hydroxylase BRADO4652.